A 184-amino-acid polypeptide reads, in one-letter code: Gremlin-1 (184 aa).

The signal sequence occupies residues 1-24 (MNRTAYTVGALLLLLGTLLPTAEG). Residues 23–77 (EGKKKGSQGAIPPPDKAQHNDSEQTQSPPQPGSRTRGRGQGRGTAMPGEEVLESS) form a disordered region. An N-linked (GlcNAc...) asparagine glycan is attached at Asn-42. Cystine bridges form between Cys-94–Cys-144, Cys-108–Cys-158, Cys-118–Cys-176, and Cys-122–Cys-178. The 91-residue stretch at 94 to 184 (CKTQPLKQTI…QCRCISIDLD (91 aa)) folds into the CTCK domain.

Belongs to the DAN family. As to quaternary structure, homodimer; can also form homooligomers. Interacts with BMP2; can form higher oligomers with BMP2. Interacts with SLIT1 and SLIT2 in a glycosylation-dependent manner. In terms of tissue distribution, highly expressed in spleen and to a lesser extent in lung, skeletal muscle and kidney. Expressed only in non-transformed cells or primary fibroblasts in culture but not in established transformed or tumor derived cell lines. Broadly expressed in limb bud mesenchyme but restricted to the distal limb bud mesenchyme and concentrated posteriorly. Expressed in ovary especially in granulosa cells of follicles of type 4.

The protein resides in the secreted. Cytokine that may play an important role during carcinogenesis and metanephric kidney organogenesis, as BMP a antagonist required for early limb outgrowth and patterning in maintaining the FGF4-SHH feedback loop. Down-regulates the BMP4 signaling in a dose-dependent manner. Antagonist of BMP2; inhibits BMP2-mediated differentiation of osteoblasts (in vitro). Acts as inhibitor of monocyte chemotaxis. This is Gremlin-1 (Grem1) from Mus musculus (Mouse).